A 490-amino-acid chain; its full sequence is Betaine aldehyde dehydrogenase (490 aa).

S26, I27, and D93 together coordinate K(+). 150–152 (GAW) is an NAD(+) binding site. K162 functions as the Charge relay system in the catalytic mechanism. An NAD(+)-binding site is contributed by 176 to 179 (KPSE). V180 lines the K(+) pocket. 230-233 (GTDT) is an NAD(+) binding site. L246 is a K(+) binding site. E252 serves as the catalytic Proton acceptor. The NAD(+) site is built by G254, C286, and E387. C286 functions as the Nucleophile in the catalytic mechanism. C286 bears the Cysteine sulfenic acid (-SOH) mark. K(+) is bound by residues K457 and G460. The Charge relay system role is filled by E464.

It belongs to the aldehyde dehydrogenase family. Dimer of dimers. It depends on K(+) as a cofactor.

The enzyme catalyses betaine aldehyde + NAD(+) + H2O = glycine betaine + NADH + 2 H(+). The protein operates within amine and polyamine biosynthesis; betaine biosynthesis via choline pathway; betaine from betaine aldehyde: step 1/1. In terms of biological role, involved in the biosynthesis of the osmoprotectant glycine betaine. Catalyzes the irreversible oxidation of betaine aldehyde to the corresponding acid. In Pseudomonas syringae pv. tomato (strain ATCC BAA-871 / DC3000), this protein is Betaine aldehyde dehydrogenase.